Here is a 70-residue protein sequence, read N- to C-terminus: uncharacterized protein (70 aa).

Residues 5-59 form the HTH cro/C1-type domain; sequence IREFRAKYGMTQEELAKKVGVRRETIVFLEKGKYNPSLRLAYKIARVFNARIEDL. A DNA-binding region (H-T-H motif) is located at residues 16 to 35; that stretch reads QEELAKKVGVRRETIVFLEK.

This is an uncharacterized protein from Archaeoglobus fulgidus (strain ATCC 49558 / DSM 4304 / JCM 9628 / NBRC 100126 / VC-16).